A 344-amino-acid chain; its full sequence is Phenylalanine--tRNA ligase alpha subunit (344 aa).

Position 256 (Glu256) interacts with Mg(2+).

Belongs to the class-II aminoacyl-tRNA synthetase family. Phe-tRNA synthetase alpha subunit type 1 subfamily. In terms of assembly, tetramer of two alpha and two beta subunits. Mg(2+) serves as cofactor.

Its subcellular location is the cytoplasm. It catalyses the reaction tRNA(Phe) + L-phenylalanine + ATP = L-phenylalanyl-tRNA(Phe) + AMP + diphosphate + H(+). In Bacillus pumilus (strain SAFR-032), this protein is Phenylalanine--tRNA ligase alpha subunit.